A 507-amino-acid chain; its full sequence is MTVFSRPGSAGALMSYESRYQNFIGGQWVAPVHGRYFENPTPVTGQPFCEVPRSDAADIDKALDAAHAAAPGWGKTAPAERAAILNMIADRIDKNAAALAVAEVWDNGKPVREALAADIPLAVDHFRYFAAAIRAQEGALSQIDEDTVAYHFHEPLGVVGQIIPWNFPILMAAWKLAPALAAGNTAVLKPAEQTPASVLYLMSLIGDLLPPGVVNVVNGFGAEAGKPLASSDRIAKVAFTGETTTGRLIMQYASHNLIPVTLELGGKSPNIFFADVLAAHDDFCDKALEGFTMFALNQGEVCTCPSRSLIQADIYDEFLELAAIRTKAVRQGDPLDTETMLGSQASNDQLEKVLSYIEIGKQEGAVIIAGGERAELGGDLSGGYYMQPTIFTGTNNMRIFKEEIFGPVVAVTSFTDYDDAIGIANDTLYGLGAGVWSRDGNTAYRAGRDIQAGRVWVNCYHLYPAHAAFGGYKQSGIGREGHQMMLQHYQHTKNLLVSYSDKALGFF.

NAD(+) is bound at residue 219 to 225; it reads GFGAEAG. Active-site residues include E263 and C302.

This sequence belongs to the aldehyde dehydrogenase family.

It carries out the reaction an aldehyde + NAD(+) + H2O = a carboxylate + NADH + 2 H(+). The chain is Probable aldehyde dehydrogenase from Mycobacterium bovis (strain ATCC BAA-935 / AF2122/97).